A 72-amino-acid polypeptide reads, in one-letter code: Prokaryotic ubiquitin-like protein Pup (72 aa).

Over residues 1 to 10 (MATRDSGGGQ) the composition is skewed to gly residues. Residues 1–41 (MATRDSGGGQQRADRRAEEIDDVATEDTSASDLKERHEKLS) form a disordered region. Residues 27–61 (DTSASDLKERHEKLSEDVDSLLDEIDDVLEENAEE) are a coiled coil. The ARC ATPase binding stretch occupies residues 28–66 (TSASDLKERHEKLSEDVDSLLDEIDDVLEENAEEFVKGY). The segment covering 32–41 (DLKERHEKLS) has biased composition (basic and acidic residues). Q72 carries the deamidated glutamine modification. Q72 participates in a covalent cross-link: Isoglutamyl lysine isopeptide (Gln-Lys) (interchain with K-? in acceptor proteins).

This sequence belongs to the prokaryotic ubiquitin-like protein family. As to quaternary structure, strongly interacts with the proteasome-associated ATPase ARC through a hydrophobic interface; the interacting region of Pup lies in its C-terminal half. There is one Pup binding site per ARC hexamer ring. Is modified by deamidation of its C-terminal glutamine to glutamate by the deamidase Dop, a prerequisite to the subsequent pupylation process.

It participates in protein degradation; proteasomal Pup-dependent pathway. Its function is as follows. Protein modifier that is covalently attached to lysine residues of substrate proteins, thereby targeting them for proteasomal degradation. The tagging system is termed pupylation. This is Prokaryotic ubiquitin-like protein Pup from Frankia casuarinae (strain DSM 45818 / CECT 9043 / HFP020203 / CcI3).